The primary structure comprises 1143 residues: Serine/threonine-protein kinase BRI1-like 2 (1143 aa).

The first 31 residues, 1 to 31, serve as a signal peptide directing secretion; that stretch reads MTTSPIRVRIRTRIQISFIFLLTHLSQSSSS. Residues 32 to 756 lie on the Extracellular side of the membrane; sequence DQSSLKTDSL…GTRAASWANS (725 aa). The short motif at 68–75 is the Cys pair 1 element; that stretch reads CQFSGVTC. LRR repeat units follow at residues 77-101, 102-125, 126-150, 151-175, 177-200, 203-227, 228-250, 251-275, 277-299, 300-324, 326-349, 351-373, 374-398, 399-422, 424-446, 447-470, 472-493, 494-518, 520-542, 570-594, 610-634, 635-660, 662-681, and 682-707; these read GGRV…AFTS, LDSL…LLLL, PLTL…FFSK, YSNL…LFLS, KKLQ…TIPL, CVSM…LINC, TNLK…SFGE, LKLL…IGDT, RSLQ…SLSS, CSWL…ILRS, GSLQ…ISAC, SLRI…LCPG, AASL…ISQC, SELR…IGNL, KLEQ…IGKL, QNLK…FFNC, NIEW…DFGI, LSRL…LGKC, TLVW…LGRQ, VGGL…KSCD, YQTI…IGEM, IALQ…QLKN, GVFD…SFSN, and LSFL…QLST. N-linked (GlcNAc...) asparagine glycosylation is found at Asn84 and Asn118. Residues Asn163, Asn188, Asn226, and Asn234 are each glycosylated (N-linked (GlcNAc...) asparagine). Residues Asn288 and Asn312 are each glycosylated (N-linked (GlcNAc...) asparagine). Residue Asn412 is glycosylated (N-linked (GlcNAc...) asparagine). N-linked (GlcNAc...) asparagine glycosylation is present at Asn469. Residue Asn506 is glycosylated (N-linked (GlcNAc...) asparagine). An N-linked (GlcNAc...) asparagine glycan is attached at Asn681. The Cys pair 2 signature appears at 720 to 727; that stretch reads CGVPLPEC. A helical transmembrane segment spans residues 757-777; it reads IVLGVLISAASVCILIVWAIA. The Cytoplasmic segment spans residues 778-1143; sequence VRARRRDADD…NNSHSHSNSL (366 aa). Thr835 carries the phosphothreonine modification. The Protein kinase domain maps to 838–1129; the sequence is FSAASMIGHG…LQVVASLREL (292 aa). Residues 844 to 852 and Lys866 contribute to the ATP site; that span reads IGHGGFGEV. Tyr911 carries the post-translational modification Phosphotyrosine. Asp966 serves as the catalytic Proton acceptor. Residue Ser1001 is modified to Phosphoserine. Tyr1009 carries the post-translational modification Phosphotyrosine.

Belongs to the protein kinase superfamily. Ser/Thr protein kinase family. As to quaternary structure, interacts with TTL3. As to expression, expressed in provascular and procambial sites throughout plant development. Expressed throughout globe- to heart-staged embryos. Then, it is restricted to procambial cells by the late torpedo stage, and this pattern persists throughout the duration of embryo development. After germination, it is expressed not only in procambial cells throughout the plant but also in all lateral organ primordia before the onset of vascularization.

Its subcellular location is the cell membrane. The catalysed reaction is L-seryl-[protein] + ATP = O-phospho-L-seryl-[protein] + ADP + H(+). It catalyses the reaction L-threonyl-[protein] + ATP = O-phospho-L-threonyl-[protein] + ADP + H(+). Its function is as follows. Receptor with a serine/threonine-protein kinase activity, which may transduce extracellular spatial and temporal signals into downstream cell differentiation responses in provascular and procambial cells. In contrast to BRI1, BRL1 and BRL3, it does not bind brassinolide. This Arabidopsis thaliana (Mouse-ear cress) protein is Serine/threonine-protein kinase BRI1-like 2.